The primary structure comprises 1993 residues: [F-actin]-monooxygenase MICAL3 (1993 aa).

The tract at residues 2 to 494 (EERKQETTNQ…RHLYDSGETK (493 aa)) is monooxygenase domain. FAD is bound by residues cysteine 97, 116–118 (EKR), 123–125 (RNN), phenylalanine 183, tyrosine 298, and aspartate 398. The Calponin-homology (CH) domain occupies 518–624 (VARSSKLLGW…YLTQFYEMFK (107 aa)). Serine 649 carries the post-translational modification Phosphoserine. A disordered region spans residues 658-704 (GQTISRKRSPKDKKEKDSDGAGKRRKTSQSEEEEPPRSYKGERPTLV). Residues 669–679 (DKKEKDSDGAG) are compositionally biased toward basic and acidic residues. A phosphoserine mark is found at serine 685 and serine 687. In terms of domain architecture, LIM zinc-binding spans 762–824 (DTCYFCQKRV…KPHYCYRLSG (63 aa)). The Zn(2+) site is built by cysteine 764, cysteine 767, histidine 785, cysteine 788, cysteine 791, cysteine 794, cysteine 814, and histidine 817. The segment at 854-886 (NGLASVAASSAERSPGTSMNGLEEPSIAKRLRG) is disordered. Over residues 860–873 (AASSAERSPGTSMN) the composition is skewed to polar residues. Phosphothreonine is present on threonine 887. Disordered stretches follow at residues 905-1023 (ELEE…RLQQ), 1039-1309 (WTHI…LSGP), 1332-1546 (IRRS…FFTP), and 1559-1837 (KENG…EELK). Residues 938-951 (SEMEEEEEEDDEDD) show a composition bias toward acidic residues. The segment covering 975–988 (GRSEEELEASKNFE) has biased composition (basic and acidic residues). Serine 977 is subject to Phosphoserine. Residues 989-1014 (PEEEEEEEEYEEEDEEYEEEEEEESS) show a composition bias toward acidic residues. Residues 1039–1051 (WTHIREREAEERM) show a composition bias toward basic and acidic residues. The segment covering 1065–1090 (DEDDLEEDADSEPAETEGEAAEDGDP) has biased composition (acidic residues). Residues 1111–1148 (EAEHRLQSQAKVKAELELRVSENEEEKPSDAPKQEERG) show a composition bias toward basic and acidic residues. Serine 1131 and serine 1187 each carry phosphoserine. A compositionally biased stretch (basic and acidic residues) spans 1199–1212 (LREKPKAEVPEEQK). The segment covering 1230 to 1239 (SPTSPTSLQP) has biased composition (polar residues). Residues 1245-1255 (PPTPPTPPPTQ) show a composition bias toward pro residues. The segment covering 1257–1275 (PICSQPQPSSDASIPSPTK) has biased composition (polar residues). Residue serine 1272 is modified to Phosphoserine. Phosphothreonine is present on threonine 1274. A phosphoserine mark is found at serine 1276 and serine 1335. Position 1339 is a phosphothreonine (threonine 1339). Phosphoserine occurs at positions 1369 and 1382. Residues 1405 to 1420 (PSDKELRSSQEERRDL) show a composition bias toward basic and acidic residues. A compositionally biased stretch (low complexity) spans 1421-1433 (SSSSGLGLHDSSS). Serine 1431 carries the post-translational modification Phosphoserine. The span at 1434 to 1452 (NMKTLGSQSFNTSDSTMLT) shows a compositional bias: polar residues. Threonine 1452 is modified (phosphothreonine). The segment covering 1454 to 1465 (PSSPPPPPPPNE) has biased composition (pro residues). Positions 1516-1530 (SVDEIPFADDVEDTY) are enriched in acidic residues. A compositionally biased stretch (basic and acidic residues) spans 1584–1600 (EAKELAEERMRAREKSV). Residues 1623–1633 (SSRSHTAQSQG) show a composition bias toward polar residues. Serine 1640 bears the Phosphoserine mark. The span at 1665–1685 (SPPSDSGGPDGSVTSSEGSSG) shows a compositional bias: low complexity. Basic residues predominate over residues 1686–1704 (KSKKRSSLFSPRRNKKEKK). A phosphoserine mark is found at serine 1692 and serine 1695. Residues 1754-1763 (TPSSGATVDS) are compositionally biased toward polar residues. Residues 1795 to 1811 (ILERSSQKSKREPRTYT) show a composition bias toward basic and acidic residues. Positions 1817-1983 (AKLTRRVQKA…EEDKDLEAAM (167 aa)) form a coiled coil. Basic residues predominate over residues 1819-1830 (LTRRVQKAARRQ). The bMERB domain maps to 1832 to 1981 (KQEELKRLHR…EKEEDKDLEA (150 aa)). Serine 1903 carries the phosphoserine modification.

Belongs to the Mical family. As to quaternary structure, interacts with RAB1B, RAB8A, RAB10, RAB13 and RAB15 (in their GTP-bound forms); binding to RAB1B is of low affinity compared to other Rab proteins; at least in case of RAB8A can bind 2 molecules of RAB8A simultaneously through a high and a low affinity binding site, respectively. Interacts with ERC1 and RAB8A; may bridge ERC1 with RAB8A. Interacts with KIF23 and ERC1; enhances the interaction between KIF23 and ERC1. Interacts with NINL. FAD serves as cofactor.

It is found in the cytoplasm. The protein resides in the cell cortex. The protein localises to the cytoskeleton. It localises to the nucleus. Its subcellular location is the midbody. It is found in the spindle. The protein resides in the cilium basal body. It catalyses the reaction L-methionyl-[F-actin] + NADPH + O2 + H(+) = L-methionyl-(R)-S-oxide-[F-actin] + NADP(+) + H2O. Functionally, monooxygenase that promotes depolymerization of F-actin by mediating oxidation of specific methionine residues on actin to form methionine-sulfoxide, resulting in actin filament disassembly and preventing repolymerization. In the absence of actin, it also functions as a NADPH oxidase producing H(2)O(2). Seems to act as Rab effector protein and play a role in vesicle trafficking. Involved in exocytic vesicles tethering and fusion: the monooxygenase activity is required for this process and implicates RAB8A associated with exocytotic vesicles. Required for cytokinesis. Contributes to stabilization and/or maturation of the intercellular bridge independently of its monooxygenase activity. Promotes recruitment of Rab8 and ERC1 to the intercellular bridge, and together these proteins are proposed to function in timely abscission. The chain is [F-actin]-monooxygenase MICAL3 (Mical3) from Mus musculus (Mouse).